We begin with the raw amino-acid sequence, 104 residues long: Iron-sulfur cluster assembly protein CyaY (104 aa).

It belongs to the frataxin family.

Functionally, involved in iron-sulfur (Fe-S) cluster assembly. May act as a regulator of Fe-S biogenesis. The polypeptide is Iron-sulfur cluster assembly protein CyaY (Vibrio campbellii (strain ATCC BAA-1116)).